The following is a 211-amino-acid chain: UPF0319 protein VC_A0026 (211 aa).

Residues 1-21 form the signal peptide; sequence MKPMQRLTCLLALCFAASASA.

Belongs to the UPF0319 family.

The chain is UPF0319 protein VC_A0026 from Vibrio cholerae serotype O1 (strain ATCC 39315 / El Tor Inaba N16961).